We begin with the raw amino-acid sequence, 354 residues long: Probable glucan endo-1,3-beta-glucosidase BG5 (354 aa).

Positions Met1 to Ala30 are cleaved as a signal peptide. Glu137 serves as the catalytic Proton donor. Residue Glu276 is the Nucleophile of the active site. An N-linked (GlcNAc...) asparagine glycan is attached at Asn286.

This sequence belongs to the glycosyl hydrolase 17 family.

It is found in the secreted. The catalysed reaction is Hydrolysis of (1-&gt;3)-beta-D-glucosidic linkages in (1-&gt;3)-beta-D-glucans.. In terms of biological role, may play a role in plant defense against pathogens. This is Probable glucan endo-1,3-beta-glucosidase BG5 from Arabidopsis thaliana (Mouse-ear cress).